Consider the following 68-residue polypeptide: Phylloseptin-SP1 (68 aa).

Residues 1–22 form the signal peptide; sequence MAFLKKSLFLVLFLGLVSLSIC. Residues 23-45 constitute a propeptide that is removed on maturation; that stretch reads EEKERETKEEENEQEDDNREEKR. Leucine 67 bears the Leucine amide mark.

Expressed by the skin glands.

It is found in the secreted. Weak cationic amphipathic alpha-helical antimicrobial peptide with weak activity against Gram-positive and Gram-negative bacteria and fungi. Has been tested against E.coli (MIC&gt;217.69 uM), S.aureus (MIC&gt;217.69 uM), K.pneumoniae (MIC&gt;189.00 uM) and C.albicans (MIC&gt;217.69 uM). Shows a moderate hemolytic activity. The chain is Phylloseptin-SP1 from Agalychnis spurrelli (Gliding leaf frog).